The sequence spans 270 residues: L-aspartate dehydrogenase (270 aa).

2 residues coordinate NAD(+): alanine 123 and asparagine 191. Histidine 221 is an active-site residue.

Belongs to the L-aspartate dehydrogenase family.

It carries out the reaction L-aspartate + NADP(+) + H2O = oxaloacetate + NH4(+) + NADPH + H(+). The enzyme catalyses L-aspartate + NAD(+) + H2O = oxaloacetate + NH4(+) + NADH + H(+). The protein operates within cofactor biosynthesis; NAD(+) biosynthesis; iminoaspartate from L-aspartate (dehydrogenase route): step 1/1. Specifically catalyzes the NAD or NADP-dependent dehydrogenation of L-aspartate to iminoaspartate. The polypeptide is L-aspartate dehydrogenase (Methanocella arvoryzae (strain DSM 22066 / NBRC 105507 / MRE50)).